The primary structure comprises 117 residues: MARVKTGVVRRRRHKKVLKLARGFFSARRKHFRKAKEQVERSLVYSYRDRRNKKRDFRRLWIVRINAACRLNDISYSKFINALKKANIELDRKVLADLAMNDAAAFSAIVAQAKKVM.

It belongs to the bacterial ribosomal protein bL20 family.

In terms of biological role, binds directly to 23S ribosomal RNA and is necessary for the in vitro assembly process of the 50S ribosomal subunit. It is not involved in the protein synthesizing functions of that subunit. The chain is Large ribosomal subunit protein bL20 from Campylobacter hominis (strain ATCC BAA-381 / DSM 21671 / CCUG 45161 / LMG 19568 / NCTC 13146 / CH001A).